Consider the following 2453-residue polypeptide: Tyrosine-protein phosphatase non-receptor type 13 (2453 aa).

The region spanning valine 3–serine 190 is the KIND domain. The segment at threonine 183–leucine 227 is disordered. Residues serine 190–arginine 205 are compositionally biased toward basic and acidic residues. Serine 240 bears the Phosphoserine mark. The interval glutamate 253–glutamine 285 is disordered. Residues leucine 256 to serine 270 are compositionally biased toward basic and acidic residues. Positions threonine 272–glutamine 285 are enriched in polar residues. Residues serine 297 and serine 298 each carry the phosphoserine modification. The tract at residues serine 429–glutamate 457 is disordered. The segment covering threonine 447–glutamate 457 has biased composition (polar residues). A coiled-coil region spans residues threonine 458–serine 493. The FERM domain occupies arginine 565–arginine 865. Phosphoserine is present on residues serine 883, serine 890, serine 901, serine 904, and serine 907. Over residues lysine 944–arginine 957 the composition is skewed to basic and acidic residues. Disordered stretches follow at residues lysine 944–leucine 966 and leucine 1007–lysine 1063. Serine 1021 and serine 1025 each carry phosphoserine. Residues serine 1025–aspartate 1034 show a composition bias toward basic and acidic residues. Over residues serine 1049–serine 1058 the composition is skewed to low complexity. Serine 1076 is subject to Phosphoserine. The PDZ 1 domain maps to leucine 1084–lysine 1170. Disordered stretches follow at residues aspartate 1199–phenylalanine 1356 and glycine 1441–valine 1478. Serine 1221 carries the phosphoserine modification. Polar residues-rich tracts occupy residues glutamate 1242 to asparagine 1252 and proline 1267 to lysine 1279. At serine 1270 the chain carries Phosphoserine. Residues glycine 1297–serine 1315 are compositionally biased toward basic and acidic residues. Residues serine 1331–serine 1341 are compositionally biased toward low complexity. One can recognise a PDZ 2 domain in the interval glutamate 1357 to glutamine 1442. Basic and acidic residues predominate over residues alanine 1467–valine 1478. The PDZ 3 domain maps to glutamate 1491–alanine 1579. Positions leucine 1602–lysine 1629 are enriched in polar residues. Disordered stretches follow at residues leucine 1602 to proline 1662 and lysine 1695 to threonine 1726. Positions serine 1638–valine 1655 are enriched in basic and acidic residues. 2 PDZ domains span residues leucine 1764–leucine 1845 and leucine 1857–glycine 1942. Disordered stretches follow at residues glutamate 1991–tyrosine 2024 and arginine 2051–phenylalanine 2139. Basic and acidic residues predominate over residues glutamate 2012–aspartate 2021. In terms of domain architecture, Tyrosine-protein phosphatase spans proline 2180–valine 2434. Residues aspartate 2345, cysteine 2375 to arginine 2381, and glutamine 2419 contribute to the substrate site. Cysteine 2375 serves as the catalytic Phosphocysteine intermediate.

The protein belongs to the protein-tyrosine phosphatase family. Non-receptor class subfamily. Interacts (via the first PDZ domain) with PLEKHA1 and PLEKHA2. Interacts (via the second PDZ domain) with TNFRSF6 (Fas receptor) (via C-terminus). Interacts (via the second PDZ domain) with TRIP6 (via the third LIM domain and C-terminus). Interacts (via the third PDZ domain) with NGFR (via C-terminal SVP motif) and PKN2 (via C-terminus). Interacts (via the second or fourth PDZ domains) with PDLIM4 (via C-terminus only or via combined C-terminus and LIM domain, but not LIM domain only). Found in a complex with PDLIM4 and TRIP6. Interacts with PDLIM4; this interaction results in dephosphorylation of SRC 'Tyr-419' by this protein leading to its inactivation. Interacts with BRD7. Interacts with RAPGEF6. Interacts with ARHGAP29. Interacts with PIK3R2; dephosphorylates PIK3R2. Interacts with FBXL2. Interacts (via the FERM domain) with ENTR1. Found in a complex with ENTR1, PTPN13 and GIT1. In terms of tissue distribution, expressed predominantly in kidney and, to a lesser extent, in lung, heart, brain and testis.

The protein localises to the cytoplasm. It localises to the cytoskeleton. Its subcellular location is the nucleus. The protein resides in the cell projection. It is found in the lamellipodium. The catalysed reaction is O-phospho-L-tyrosyl-[protein] + H2O = L-tyrosyl-[protein] + phosphate. Functionally, tyrosine phosphatase which negatively regulates FAS-induced apoptosis and NGFR-mediated pro-apoptotic signaling. May regulate phosphoinositide 3-kinase (PI3K) signaling through dephosphorylation of PIK3R2. The chain is Tyrosine-protein phosphatase non-receptor type 13 (Ptpn13) from Mus musculus (Mouse).